Here is a 456-residue protein sequence, read N- to C-terminus: UDP-N-acetylmuramoylalanine--D-glutamate ligase (456 aa).

119 to 125 (GSNGKTT) is a binding site for ATP.

The protein belongs to the MurCDEF family.

The protein resides in the cytoplasm. It catalyses the reaction UDP-N-acetyl-alpha-D-muramoyl-L-alanine + D-glutamate + ATP = UDP-N-acetyl-alpha-D-muramoyl-L-alanyl-D-glutamate + ADP + phosphate + H(+). Its pathway is cell wall biogenesis; peptidoglycan biosynthesis. Cell wall formation. Catalyzes the addition of glutamate to the nucleotide precursor UDP-N-acetylmuramoyl-L-alanine (UMA). The polypeptide is UDP-N-acetylmuramoylalanine--D-glutamate ligase (Limosilactobacillus reuteri (strain DSM 20016) (Lactobacillus reuteri)).